We begin with the raw amino-acid sequence, 507 residues long: Xaa-Pro aminopeptidase 3 (507 aa).

A mitochondrion-targeting transit peptide spans 1–31 (MPWLLSAPKLVPAVANVRGLSGCMLCSQRRY). The segment at 54–79 (HPHLLRPGEVTPGLSQVEYALRRHKL) is interaction with TNFRSF1B. Tyrosine 300, aspartate 331, aspartate 342, histidine 424, histidine 431, glutamate 451, and glutamate 475 together coordinate substrate. Aspartate 331, aspartate 342, and histidine 424 together coordinate Mn(2+). Residues glutamate 451 and glutamate 475 each contribute to the Mn(2+) site.

Belongs to the peptidase M24B family. As to quaternary structure, homodimer. Isoform 1 interacts with TNFRSF1B/TNFR2 (activated) and TRAF2. The cofactor is Mn(2+). Isoform 1 and isoform 2 are widely expressed, with isoform 1 being more abundant.

It localises to the mitochondrion. It is found in the cytoplasm. The enzyme catalyses Release of any N-terminal amino acid, including proline, that is linked to proline, even from a dipeptide or tripeptide.. Its function is as follows. Catalyzes the removal of a penultimate prolyl residue from the N-termini of peptides, such as Leu-Pro-Ala. Also shows low activity towards peptides with Ala or Ser at the P1 position. Functionally, promotes TNFRSF1B-mediated phosphorylation of MAPK8/JNK1 and MAPK9/JNK2, suggesting a function as an adapter protein for TNFRSF1B; the effect is independent of XPNPEP3 peptidase activity. May inhibit apoptotic cell death induced via TNF-TNFRSF1B signaling. The protein is Xaa-Pro aminopeptidase 3 (XPNPEP3) of Homo sapiens (Human).